A 151-amino-acid chain; its full sequence is Multiprotein-bridging factor 1 (151 aa).

Residues 1-31 (MSDWESHTVIGQKARAGGSGPRANVARTQGQ) form a disordered region. The HTH cro/C1-type domain occupies 85 to 139 (IARVRTEKKMSQKDLATKINEKPTVINDYEAGRAIPNQQVLGKMERALGVKLRGK). A DNA-binding region (H-T-H motif) is located at residues 96–115 (QKDLATKINEKPTVINDYEA).

Belongs to the MBF1 family.

In terms of biological role, transcriptional coactivator that stimulates GCN4-dependent transcriptional activity by bridging the DNA-binding region of GCN4 and TBP (SPT15), thereby recruiting TBP to GCN4-bound promoters. Involved in induction of the ribosome quality control (RQC) pathway; a pathway that degrades nascent peptide chains during problematic translation. Required to prevent stalled ribosomes from frameshifting. This is Multiprotein-bridging factor 1 (MBF1) from Candida glabrata (strain ATCC 2001 / BCRC 20586 / JCM 3761 / NBRC 0622 / NRRL Y-65 / CBS 138) (Yeast).